A 696-amino-acid polypeptide reads, in one-letter code: Potassium voltage-gated channel subfamily KQT member 4 (696 aa).

Residues 1–20 (MAEAPPRRLGLGPPPGDAPR) are disordered. Residues 1-97 (MAEAPPRRLG…VYNVLERPRG (97 aa)) are Cytoplasmic-facing. A 1,2-diacyl-sn-glycero-3-phospho-(1D-myo-inositol-4,5-bisphosphate) is bound at residue Arg-94. The helical transmembrane segment at 98 to 119 (WAFVYHVFIFLLVFSCLVLSVL) threads the bilayer. Residues 120-130 (STIQEHQELAN) lie on the Extracellular side of the membrane. The helical transmembrane segment at 131-153 (ECLLILEFVMIVVFGLEYIIRVW) threads the bilayer. The Cytoplasmic portion of the chain corresponds to 154 to 169 (SAGCCCRYRGWQGRFR). Residues 170–192 (FARKPFCVIDFIVFVASVAVIAA) traverse the membrane as a helical segment. Position 173 (Lys-173) interacts with a 1,2-diacyl-sn-glycero-3-phospho-(1D-myo-inositol-4,5-bisphosphate). Over 193–203 (GTQGNIFATSA) the chain is Extracellular. The chain crosses the membrane as a helical; Voltage-sensor span at residues 204 to 224 (LRSMRFLQILRMVRMDRRGGT). The a 1,2-diacyl-sn-glycero-3-phospho-(1D-myo-inositol-4,5-bisphosphate) site is built by Arg-220, Arg-221, Lys-226, and Ser-236. The Cytoplasmic segment spans residues 225–236 (WKLLGSVVYAHS). Residues 237-259 (KELITAWYIGFLVLIFASFLVYL) traverse the membrane as a helical segment. The Extracellular portion of the chain corresponds to 260–271 (AEKDANSDFSSY). Positions 272–293 (ADSLWWGTITLTTIGYGDKTPH) form an intramembrane region, pore-forming. Position 294 (Thr-294) is a topological domain, extracellular. Residues 295–323 (WLGRVLAAGFALLGISFFALPAGILGSGF) traverse the membrane as a helical segment. Topologically, residues 324 to 696 (ALKVQEQHRQ…ISRSVSTNMD (373 aa)) are cytoplasmic. 2 residues coordinate a 1,2-diacyl-sn-glycero-3-phospho-(1D-myo-inositol-4,5-bisphosphate): His-331 and Lys-334. The interval 343–352 (AANLIQAAWR) is interaction with CALM. Residues 445–484 (SSQKRTGPSKQHLAPPPIPTSPSSEQVGEASSPSKVQKSW) are disordered. A compositionally biased stretch (polar residues) spans 465 to 484 (SPSSEQVGEASSPSKVQKSW). The tract at residues 536 to 550 (RSVRILKFLVAKRKF) is interaction with CALM. The segment at 547–651 (KRKFKETLRP…SRCLRSGTSA (105 aa)) is C-terminal assembly domain (tetramerization). The tract at residues 589–609 (GRGPGDRKTREKGDKGPSDTE) is disordered. The span at 592–606 (PGDRKTREKGDKGPS) shows a compositional bias: basic and acidic residues. A coiled-coil region spans residues 610–645 (AVDEISMMGRVVKVEKQVQSIEHKLDLLLGFYSRCL).

It belongs to the potassium channel family. KQT (TC 1.A.1.15) subfamily. Kv7.4/KCNQ4 sub-subfamily. In terms of assembly, homotetramer. Interacts (via C-terminus) with calmodulin; forms a heterooctameric structure (with 4:4 KCNQ1:CALM stoichiometry); the interaction is calcium-independent, constitutive, participates in the proper assembly of a functional channel. The interaction with calcium-free CALM controls channel trafficking whereas interaction with calcium-bound CALM regulates channel gating. May form a functional heteromultimeric channel with KCNQ3. Interacts with HSP90AB1; promotes cell surface expression of KCNQ4. As to expression, in the inner ear expressed in the outer sensory hair cells of the cochlea and in type I hair cells of the vestibular organs. Also expressed in the postsynaptic membrane of the calyx nerve endings innervating type I cells. In the brain expressed in neurons of many, but not all, nuclei of the central auditory pathway. Absent from most other brain regions.

The protein localises to the basal cell membrane. The catalysed reaction is K(+)(in) = K(+)(out). Two molecules of phosphatidylinositol-4,5-bisphosphate (PIP2-I and PIP2-II) are essential to activate KCNQ4 channel by inducing the coupling of the voltage-sensing domain (VSD) and the pore-forming domain (PD). Upon channel activation, PIP2-I and PIP2-II disrupt the VSD-calmodulin/CALM interaction, causing the release of CALM from the VSD which triggers the opening of the gate. Calcium suppresses KCNQ4 channel current through calcium-bound CALM C-terminus. Therefore CALM acts as calcium sensor that controls channel activity. Pore-forming subunit of the voltage-gated potassium (Kv) channel involved in the regulation of sensory cells excitability in the cochlea. KCNQ4/Kv7.4 channel is composed of 4 pore-forming subunits assembled as tetramers. Promotes the outflow of potassium ions in the repolarization phase of action potential which plays a role in regulating membrane potential of excitable cells. The channel conducts a slowly activating and deactivating current. Current often shows some inward rectification at positive potentials. Channel may be selectively permeable in vitro to other cations besides potassium, in decreasing order of affinity K(+) = Rb(+) &gt; Cs(+) &gt; Na(+). Important for normal physiological function of inner ear such as sensory perception of sound. The protein is Potassium voltage-gated channel subfamily KQT member 4 of Mus musculus (Mouse).